The primary structure comprises 274 residues: MHGTVLPPLKKGWQATLDLRFHQAGGKTVLASAQHVGPLTVQRPFYPEEETCHLYLLHPPGGIVGGDELTISAHLAPGCHTLITMPGASKFYRSSGAQALVRQQLTLAPQATLEWLPQDAIFFPGANARLFTTFHLCASSRLLAWDLLCLGRPVIGETFSHGTLSNRLEVWVDDEPLLVERLQLQEGELSSVAERPWVGTLLCYPATDALLDGVRDALAPLGLYAGASLTDRLLTVRFLSDDNLICQRVMRDVWQFLRPHLTGKSPVLPRIWLT.

It belongs to the UreD family. UreD, UreF and UreG form a complex that acts as a GTP-hydrolysis-dependent molecular chaperone, activating the urease apoprotein by helping to assemble the nickel containing metallocenter of UreC. The UreE protein probably delivers the nickel.

Its subcellular location is the cytoplasm. Required for maturation of urease via the functional incorporation of the urease nickel metallocenter. The sequence is that of Urease accessory protein UreD from Klebsiella pneumoniae subsp. pneumoniae (strain ATCC 700721 / MGH 78578).